The chain runs to 54 residues: Soricidin (54 aa).

Cystine bridges form between C2/C23, C6/C27, and C9/C41.

This sequence belongs to the opioid neuropeptide precursor family. Member of a multiprotein complex. In terms of tissue distribution, salivary gland.

It is found in the secreted. In terms of biological role, paralytic toxin that immobilizes a mealworm for 7 days. Inhibits the transient receptor potential cation channel subfamily V member 6 (TRPV6). The polypeptide is Soricidin (Blarina brevicauda (Northern short-tailed shrew)).